A 41-amino-acid chain; its full sequence is Submaxillary gland androgen-regulated protein 2, isoform beta (41 aa).

Residues 1-22 form the signal peptide; it reads MKALYMVFVLWVLIGCFLRLLK.

The protein localises to the secreted. In terms of biological role, may play a role in protection or detoxification. In Mus musculus (Mouse), this protein is Submaxillary gland androgen-regulated protein 2, isoform beta (Smr2).